The chain runs to 1023 residues: Sodium/potassium-transporting ATPase subunit alpha-1 (1023 aa).

Positions 1–5 (MAFKV) are excised as a propeptide. Basic and acidic residues predominate over residues 1–11 (MAFKVGRDKYE). Positions 1 to 38 (MAFKVGRDKYEPAAVSEQGDKKGKKGKKDRDMDELKKE) are disordered. Topologically, residues 6–87 (GRDKYEPAAV…NALTPPPTTP (82 aa)) are cytoplasmic. N6-acetyllysine is present on Lys-9. Phosphotyrosine is present on Tyr-10. Residue Ser-16 is modified to Phosphoserine; by PKC. The residue at position 21 (Lys-21) is an N6-acetyllysine. The segment covering 28 to 38 (KDRDMDELKKE) has biased composition (basic and acidic residues). A phosphoserine mark is found at Ser-40 and Ser-47. The tract at residues 82–84 (PPP) is phosphoinositide-3 kinase binding. The helical transmembrane segment at 88 to 108 (EWIKFCRQLFGGFSMLLWIGA) threads the bilayer. Topologically, residues 109–131 (ILCFLAYSIQAATEEEPQNDNLY) are extracellular. Residues 132–152 (LGVVLSAVVIITGCFSYYQEA) traverse the membrane as a helical segment. The Cytoplasmic portion of the chain corresponds to 153 to 288 (KSSKIMESFK…GGQTPIAAEI (136 aa)). The disordered stretch occupies residues 216–235 (SSLTGESEPQTRSPDFTNEN). Residue Ser-228 is modified to Phosphoserine. Phosphotyrosine is present on Tyr-260. Residues 289–308 (EHFIHIITGVAVFLGVSFFI) form a helical membrane-spanning segment. The Extracellular segment spans residues 309–320 (LSLILEYTWLEA). Residues 321 to 338 (VIFLIGIIVANVPEGLLA) traverse the membrane as a helical segment. At 339–772 (TVTVCLTLTA…EEGRLIFDNL (434 aa)) the chain is on the cytoplasmic side. The active-site 4-aspartylphosphate intermediate is Asp-376. A phosphoserine mark is found at Ser-452 and Ser-484. Lys-487 is a binding site for ATP. A Phosphotyrosine modification is found at Tyr-542. The tract at residues 596–717 (RAAVPDAVGK…QGAIVAVTGD (122 aa)) is mediates interaction with SCN7A. Lys-661 bears the N6-succinyllysine mark. 2 positions are modified to phosphoserine: Ser-668 and Ser-675. Residues Asp-717 and Asp-721 each coordinate Mg(2+). The helical transmembrane segment at 773-792 (KKSIAYTLTSNIPEITPFLI) threads the bilayer. The Extracellular portion of the chain corresponds to 793–802 (FIIANIPLPL). Residues 803 to 823 (GTVTILCIDLGTDMVPAISLA) traverse the membrane as a helical segment. Topologically, residues 824 to 843 (YEQAESDIMKRQPRNPKTDK) are cytoplasmic. Residues 844–866 (LVNERLISTAYGQIGMIQALGGF) traverse the membrane as a helical segment. The Extracellular segment spans residues 867–918 (FTYFVILAENGFLPLHLLGLRVDWDDRWINDVEDSYGQQWTYEQRKIVEFTC). Residues 919-938 (HTAFFVSIVVVQWADLVICK) traverse the membrane as a helical segment. Topologically, residues 939 to 951 (TRRNSVFQQGMKN) are cytoplasmic. Ser-943 bears the Phosphoserine; by PKA mark. Residues 952 to 970 (KILIFGLFEETALAAFLSY) form a helical membrane-spanning segment. Residues 971–985 (CPGMGVALRMYPLKP) are Extracellular-facing. Residues 986–1006 (TWWFCAFPYSLLIFVYDEVRK) form a helical membrane-spanning segment. The Cytoplasmic portion of the chain corresponds to 1007 to 1023 (LIIRRRPGGWVEKETYY).

This sequence belongs to the cation transport ATPase (P-type) (TC 3.A.3) family. Type IIC subfamily. In terms of assembly, the sodium/potassium-transporting ATPase is composed of a catalytic alpha subunit, an auxiliary non-catalytic beta subunit and an additional regulatory subunit. Interacts with regulatory subunit FXYD1. Interacts with regulatory subunit FXYD3. Interacts with SIK1. Interacts with SLC35G1 and STIM1. Interacts with CLN3; this interaction regulates the sodium/potassium-transporting ATPase complex localization at the plasma membrane. Interacts with SCN7A; activates ATP1A1 P-type sodium:potassium-exchanging transporter activity which indirectly signals to nearby neurons to regulate sodium homeostasis. Post-translationally, phosphorylation on Tyr-10 modulates pumping activity. Phosphorylation of Ser-943 by PKA modulates the response of ATP1A1 to PKC. Dephosphorylation by protein phosphatase 2A (PP2A) following increases in intracellular sodium, leading to increase catalytic activity.

It localises to the cell membrane. The protein resides in the basolateral cell membrane. Its subcellular location is the sarcolemma. The protein localises to the cell projection. It is found in the axon. It localises to the melanosome. It carries out the reaction K(+)(out) + Na(+)(in) + ATP + H2O = K(+)(in) + Na(+)(out) + ADP + phosphate + H(+). In terms of biological role, this is the catalytic component of the active enzyme, which catalyzes the hydrolysis of ATP coupled with the exchange of sodium and potassium ions across the plasma membrane. This action creates the electrochemical gradient of sodium and potassium ions, providing the energy for active transport of various nutrients. Could also be part of an osmosensory signaling pathway that senses body-fluid sodium levels and controls salt intake behavior as well as voluntary water intake to regulate sodium homeostasis. The polypeptide is Sodium/potassium-transporting ATPase subunit alpha-1 (ATP1A1) (Pongo abelii (Sumatran orangutan)).